The sequence spans 121 residues: Type II secretion system protein I (121 aa).

Positions 1–6 (MNKQKG) are cleaved as a propeptide — leader sequence. Position 7 is an N-methylmethionine (methionine 7). Residues 7–27 (MTLLEVLVALAIFSLAGLTLL) form a helical membrane-spanning segment.

Belongs to the GSP I family. As to quaternary structure, type II secretion is composed of four main components: the outer membrane complex, the inner membrane complex, the cytoplasmic secretion ATPase and the periplasm-spanning pseudopilus. Interacts with core component PulG. Interacts with pseudopilins PulJ and PulK. Cleaved by prepilin peptidase. Post-translationally, methylated by prepilin peptidase at the amino group of the N-terminal methionine once the leader sequence is cleaved by prepilin peptidase.

The protein resides in the cell inner membrane. In terms of biological role, component of the type II secretion system required for the energy-dependent secretion of extracellular factors such as proteases and toxins from the periplasm. Part of the pseudopilus tip complex that is critical for the recognition and binding of secretion substrates. This Klebsiella michiganensis (strain ATCC 8724 / DSM 4798 / JCM 20051 / NBRC 3318 / NRRL B-199 / KCTC 1686 / BUCSAV 143 / CCM 1901) protein is Type II secretion system protein I (pulI).